The primary structure comprises 308 residues: Very-long-chain enoyl-CoA reductase (308 aa).

The Cytoplasmic portion of the chain corresponds to 1-86 (MKHYEVEIRD…YFRDLGAQIS (86 aa)). Lysine 22 is subject to N6-acetyllysine. Serine 58 is modified (phosphoserine). The residue at position 60 (lysine 60) is an N6-acetyllysine. A helical membrane pass occupies residues 87–106 (WVTVFLTEYAGPLFIYLLFY). Topologically, residues 107 to 124 (FRVPFIYGRKYDFTSSRH) are lumenal. A helical transmembrane segment spans residues 125-147 (TVVHLACMCHSFHYIKRLLETLF). Over 148–158 (VHRFSHGTMPL) the chain is Cytoplasmic. The chain crosses the membrane as a helical span at residues 159 to 180 (RNIFKNCTYYWGFAAWMAYYIN). Topologically, residues 181–189 (HPLYTPPTY) are lumenal. The chain crosses the membrane as a helical span at residues 190 to 216 (GVQQVKLALAVFVICQLGNFSIHMALR). The Cytoplasmic portion of the chain corresponds to 217–245 (DLRPAGSKTRKIPYPTKNPFTWLFLLVSC). Residues 246-262 (PNYTYEVGSWIGFAILT) form a helical membrane-spanning segment. Residues 263 to 264 (QC) lie on the Lumenal side of the membrane. A helical transmembrane segment spans residues 265-292 (VPVALFSLVGFTQMTIWAKGKHRSYLKE). Residues 293-308 (FRDYPPLRMPIIPFLL) lie on the Cytoplasmic side of the membrane.

It belongs to the steroid 5-alpha reductase family. As to quaternary structure, interacts with ELOVL1 and LASS2. Post-translationally, glycosylated.

Its subcellular location is the endoplasmic reticulum membrane. The catalysed reaction is a very-long-chain 2,3-saturated fatty acyl-CoA + NADP(+) = a very-long-chain (2E)-enoyl-CoA + NADPH + H(+). The enzyme catalyses octadecanoyl-CoA + NADP(+) = (2E)-octadecenoyl-CoA + NADPH + H(+). It catalyses the reaction (2E,7Z,10Z,13Z,16Z)-docosapentaenoyl-CoA + NADPH + H(+) = (7Z,10Z,13Z,16Z)-docosatetraenoyl-CoA + NADP(+). It carries out the reaction (2E,7Z,10Z,13Z,16Z,19Z)-docosahexaenoyl-CoA + NADPH + H(+) = (7Z,10Z,13Z,16Z,19Z)-docosapentaenoyl-CoA + NADP(+). The catalysed reaction is (2E,8Z,11Z,14Z)-eicosatetraenoyl-CoA + NADPH + H(+) = (8Z,11Z,14Z)-eicosatrienoyl-CoA + NADP(+). The enzyme catalyses (2E)-hexadecenoyl-CoA + NADPH + H(+) = hexadecanoyl-CoA + NADP(+). It functions in the pathway lipid metabolism; fatty acid biosynthesis. The protein operates within lipid metabolism; sphingolipid metabolism. Functionally, involved in both the production of very long-chain fatty acids for sphingolipid synthesis and the degradation of the sphingosine moiety in sphingolipids through the sphingosine 1-phosphate metabolic pathway. Catalyzes the last of the four reactions of the long-chain fatty acids elongation cycle. This endoplasmic reticulum-bound enzymatic process, allows the addition of 2 carbons to the chain of long- and very long-chain fatty acids/VLCFAs per cycle. This enzyme reduces the trans-2,3-enoyl-CoA fatty acid intermediate to an acyl-CoA that can be further elongated by entering a new cycle of elongation. Thereby, it participates in the production of VLCFAs of different chain lengths that are involved in multiple biological processes as precursors of membrane lipids and lipid mediators. Catalyzes the saturation step of the sphingosine 1-phosphate metabolic pathway, the conversion of trans-2-hexadecenoyl-CoA to palmitoyl-CoA. The polypeptide is Very-long-chain enoyl-CoA reductase (Tecr) (Mus musculus (Mouse)).